The primary structure comprises 188 residues: Methionine aminopeptidase (188 aa).

Histidine 60 is a binding site for substrate. Aspartate 80, aspartate 91, and histidine 164 together coordinate a divalent metal cation. Substrate is bound at residue histidine 172.

This sequence belongs to the peptidase M24A family. Methionine aminopeptidase archaeal type 2 subfamily. As to quaternary structure, monomer. Co(2+) is required as a cofactor. The cofactor is Zn(2+). It depends on Mn(2+) as a cofactor. Fe(2+) serves as cofactor.

The catalysed reaction is Release of N-terminal amino acids, preferentially methionine, from peptides and arylamides.. Its function is as follows. Removes the N-terminal methionine from nascent proteins. The N-terminal methionine is often cleaved when the second residue in the primary sequence is small and uncharged (Met-Ala-, Cys, Gly, Pro, Ser, Thr, or Val). This chain is Methionine aminopeptidase (map), found in Methanothermus fervidus.